Consider the following 309-residue polypeptide: Ankyrin repeat and SOCS box protein 12 (309 aa).

5 ANK repeats span residues 63-92 (VPGTPLRLAASYGHLSCLQVLLAHGADVDS), 96-125 (KAQTPLFTAVSHGHLDCVRVLLEAGASPGG), 129-158 (NNCSPVLTAARDGAVAILQELLDHGAEANV), 171-200 (SCSGPLYLAAVYGHLDCFRLLLLHGADPDY), and 213-243 (RPRTLLEICLHHNCEPEYIQLLIDFGANIYL). The region spanning 268–308 (PRSLLSQVRLVVRRALCQAGQPQAINQLDIPPMLISYLKHQ) is the SOCS box domain.

Belongs to the ankyrin SOCS box (ASB) family. Interacts with CUL5 and RNF7.

It functions in the pathway protein modification; protein ubiquitination. Its function is as follows. Probable substrate-recognition component of a SCF-like ECS (Elongin-Cullin-SOCS-box protein) E3 ubiquitin-protein ligase complex which mediates the ubiquitination and subsequent proteasomal degradation of target proteins. The sequence is that of Ankyrin repeat and SOCS box protein 12 (ASB12) from Homo sapiens (Human).